We begin with the raw amino-acid sequence, 207 residues long: Cytochrome c oxidase subunit 3 (207 aa).

Transmembrane regions (helical) follow at residues 28–48, 70–90, 102–122, 144–164, and 186–206; these read FLGF…LFAT, VVFM…YAIY, LWFG…IYEF, LVGT…TLMI, and WHFI…MGMV.

It belongs to the cytochrome c oxidase subunit 3 family.

It is found in the cell membrane. The catalysed reaction is 4 Fe(II)-[cytochrome c] + O2 + 8 H(+)(in) = 4 Fe(III)-[cytochrome c] + 2 H2O + 4 H(+)(out). The chain is Cytochrome c oxidase subunit 3 (ctaE) from Bacillus sp. (strain PS3).